The chain runs to 424 residues: Serine--tRNA ligase (424 aa).

Residue 230-232 coordinates L-serine; it reads TAE. Residue 261-263 participates in ATP binding; that stretch reads RSE. L-serine is bound at residue glutamate 284. 348-351 lines the ATP pocket; sequence EISS. An L-serine-binding site is contributed by serine 384.

Belongs to the class-II aminoacyl-tRNA synthetase family. Type-1 seryl-tRNA synthetase subfamily. In terms of assembly, homodimer. The tRNA molecule binds across the dimer.

Its subcellular location is the cytoplasm. The catalysed reaction is tRNA(Ser) + L-serine + ATP = L-seryl-tRNA(Ser) + AMP + diphosphate + H(+). It catalyses the reaction tRNA(Sec) + L-serine + ATP = L-seryl-tRNA(Sec) + AMP + diphosphate + H(+). It functions in the pathway aminoacyl-tRNA biosynthesis; selenocysteinyl-tRNA(Sec) biosynthesis; L-seryl-tRNA(Sec) from L-serine and tRNA(Sec): step 1/1. In terms of biological role, catalyzes the attachment of serine to tRNA(Ser). Is also able to aminoacylate tRNA(Sec) with serine, to form the misacylated tRNA L-seryl-tRNA(Sec), which will be further converted into selenocysteinyl-tRNA(Sec). The polypeptide is Serine--tRNA ligase (Streptococcus pneumoniae (strain JJA)).